The following is a 248-amino-acid chain: MIVVFVGTAGSGKTTLTGEFGRYLEDNYKVAYVNLDTGVKELPYEPSIDVREFVTVEEIMREGYGPNGAIVESYDRLMEKFNEYLNKILRLEKENDYVLIDTPGQMETFLFHEFGVRLMENLPYPLVVYISDPEILKKPNDYCFVRFFALLIDLRLGATTIPALNKVDLLSEEEKERHRKYFEDIDYLTARLKLDPSMQGLMAYKMCSMMTEVLPPVRVLYLSAKTREGFEDLETLAYEHYCTCGDLT.

10-15 (GSGKTT) contacts GTP. Residues 65 to 67 (GPN) carry the Gly-Pro-Asn (GPN)-loop; involved in dimer interface motif. GTP is bound by residues 165 to 168 (NKVD) and Ala224.

It belongs to the GPN-loop GTPase family. In terms of assembly, homodimer. Interacts with DNA topoisomerase VI subunit B (top6B), DNA primase DnaG and RF-C.

Functionally, small GTPase that may be involved in genome maintenance. Has weak intrinsic GTPase activity but displays no ATPase activity. The chain is GPN-loop GTPase PAB0955 from Pyrococcus abyssi (strain GE5 / Orsay).